Consider the following 432-residue polypeptide: Neuronal pentraxin-1 (432 aa).

The N-terminal stretch at 1 to 22 (MLAGRAARTCALLALCLLGSGA) is a signal peptide. The disordered stretch occupies residues 88–122 (RCESQSTLDSGPGEARSGGGRKQPGSGKNTMGDLS). 2 N-linked (GlcNAc...) asparagine glycosylation sites follow: Asn-154 and Asn-193. Residues 226–428 (DKFQLTFPLR…GATKWTFEAC (203 aa)) form the Pentraxin (PTX) domain. A disulfide bond links Cys-256 and Cys-316. Residues Asn-280, Glu-358, Gln-359, Asp-360, and Gln-370 each contribute to the Ca(2+) site.

In terms of assembly, homooligomer or heterooligomer (probably pentamer) with neuronal pentraxin receptor (NPTXR). The cofactor is Ca(2+). In terms of tissue distribution, expressed in brain and kidney.

It localises to the secreted. The protein localises to the cytoplasmic vesicle. It is found in the secretory vesicle. Its subcellular location is the endoplasmic reticulum. Its function is as follows. May be involved in mediating uptake of synaptic material during synapse remodeling or in mediating the synaptic clustering of AMPA glutamate receptors at a subset of excitatory synapses. The sequence is that of Neuronal pentraxin-1 (Nptx1) from Mus musculus (Mouse).